Consider the following 368-residue polypeptide: Protein-glutamate methylesterase/protein-glutamine glutaminase (368 aa).

Residues 9 to 126 enclose the Response regulatory domain; the sequence is RVLVVDDSAF…SINMRELKDE (118 aa). Asp60 bears the 4-aspartylphosphate mark. The CheB-type methylesterase domain maps to 161–354; it reads SVPARIAVAI…ETVVRAVEMI (194 aa). Catalysis depends on residues Ser173, His200, and Asp296.

The protein belongs to the CheB family. Post-translationally, phosphorylated by CheA. Phosphorylation of the N-terminal regulatory domain activates the methylesterase activity.

It is found in the cytoplasm. It carries out the reaction [protein]-L-glutamate 5-O-methyl ester + H2O = L-glutamyl-[protein] + methanol + H(+). It catalyses the reaction L-glutaminyl-[protein] + H2O = L-glutamyl-[protein] + NH4(+). Involved in chemotaxis. Part of a chemotaxis signal transduction system that modulates chemotaxis in response to various stimuli. Catalyzes the demethylation of specific methylglutamate residues introduced into the chemoreceptors (methyl-accepting chemotaxis proteins or MCP) by CheR. Also mediates the irreversible deamidation of specific glutamine residues to glutamic acid. In Pyrococcus abyssi (strain GE5 / Orsay), this protein is Protein-glutamate methylesterase/protein-glutamine glutaminase.